We begin with the raw amino-acid sequence, 236 residues long: 2-C-methyl-D-erythritol 4-phosphate cytidylyltransferase (236 aa).

Belongs to the IspD/TarI cytidylyltransferase family. IspD subfamily.

It carries out the reaction 2-C-methyl-D-erythritol 4-phosphate + CTP + H(+) = 4-CDP-2-C-methyl-D-erythritol + diphosphate. Its pathway is isoprenoid biosynthesis; isopentenyl diphosphate biosynthesis via DXP pathway; isopentenyl diphosphate from 1-deoxy-D-xylulose 5-phosphate: step 2/6. In terms of biological role, catalyzes the formation of 4-diphosphocytidyl-2-C-methyl-D-erythritol from CTP and 2-C-methyl-D-erythritol 4-phosphate (MEP). This is 2-C-methyl-D-erythritol 4-phosphate cytidylyltransferase from Pseudomonas savastanoi pv. phaseolicola (strain 1448A / Race 6) (Pseudomonas syringae pv. phaseolicola (strain 1448A / Race 6)).